Here is a 381-residue protein sequence, read N- to C-terminus: Cytochrome b (381 aa).

4 consecutive transmembrane segments (helical) span residues 34–54 (FGSLLGLCLIIQIVTGLFLAM), 78–99 (WLIRNIHANGASLFFVCVYIHI), 114–134 (WNIGVILLFLLMATAFVGYVL), and 179–199 (FFAFHFLLPFLITALMVIHVL). Residues His84 and His98 each coordinate heme b. Residues His183 and His197 each contribute to the heme b site. Residue His202 participates in a ubiquinone binding. Transmembrane regions (helical) follow at residues 227–247 (YKDALGFLTLLILLGALALFL), 289–309 (LGGVLALLFSILILLLVPLLH), 321–341 (LTQVFFWILVTNMLVLTWIGG), and 348–368 (FILIGQIASITYFSLFLIAMP).

It belongs to the cytochrome b family. In terms of assembly, the cytochrome bc1 complex contains 3 respiratory subunits (MT-CYB, CYC1 and UQCRFS1), 2 core proteins (UQCRC1 and UQCRC2) and probably 6 low-molecular weight proteins. Requires heme b as cofactor.

It localises to the mitochondrion inner membrane. In terms of biological role, component of the ubiquinol-cytochrome c reductase complex (complex III or cytochrome b-c1 complex) that is part of the mitochondrial respiratory chain. The b-c1 complex mediates electron transfer from ubiquinol to cytochrome c. Contributes to the generation of a proton gradient across the mitochondrial membrane that is then used for ATP synthesis. The polypeptide is Cytochrome b (mt-cyb) (Isurus paucus (Longfin mako shark)).